We begin with the raw amino-acid sequence, 480 residues long: Sensor histidine kinase CusS (480 aa).

Residues 1-15 (MVSKPFQRPFSLATR) are Cytoplasmic-facing. A helical membrane pass occupies residues 16 to 36 (LTFFISLATIAAFFAFAWIMI). The Periplasmic segment spans residues 37–186 (HSVKVHFAEQ…LHYINDLMNK (150 aa)). The helical transmembrane segment at 187–207 (LIMTASVISILIVFIVLLAVH) threads the bilayer. Residues 208–260 (KGHAPIRSVSRQIQNITSKDLDVRLDPQTVPIELEQLVLSFNHMIERIEDVFT) form the HAMP domain. Residues 208–480 (KGHAPIRSVS…GTRFVITLPA (273 aa)) are Cytoplasmic-facing. The Histidine kinase domain occupies 268 to 480 (DIAHEIRTPI…GTRFVITLPA (213 aa)). H271 carries the phosphohistidine; by autocatalysis modification.

In terms of processing, autophosphorylated.

The protein resides in the cell inner membrane. The enzyme catalyses ATP + protein L-histidine = ADP + protein N-phospho-L-histidine.. In terms of biological role, member of the two-component regulatory system CusS/CusR involved in response to copper and silver. Acts as a copper/silver ion sensor. Activates CusR by phosphorylation. In Escherichia coli (strain K12), this protein is Sensor histidine kinase CusS (cusS).